A 382-amino-acid chain; its full sequence is Dodecanoyl-[acyl-carrier-protein] hydrolase, chloroplastic (382 aa).

A chloroplast-targeting transit peptide spans 1 to 83 (MATTSLASAF…FSAAEKQWTN (83 aa)). Catalysis depends on residues Asn-283, His-285, and Cys-320.

The protein belongs to the acyl-ACP thioesterase family. Forms homodimers. In terms of tissue distribution, expressed in developing cotyledons. Not detected in leaves.

The protein resides in the plastid. Its subcellular location is the chloroplast. It catalyses the reaction dodecanoyl-[ACP] + H2O = dodecanoate + holo-[ACP] + H(+). Functionally, plays an essential role in chain termination during de novo fatty acid synthesis. High thioesterase activity for lauroyl-ACP versus other acyl-ACPs. The chain is Dodecanoyl-[acyl-carrier-protein] hydrolase, chloroplastic from Umbellularia californica (California bay laurel).